Consider the following 93-residue polypeptide: Putative ribosomal protein eL43-like (93 aa).

The C4-type zinc-finger motif lies at 40 to 61 (CSFCGKTKMKRRAVKIRHCNSC).

It belongs to the eukaryotic ribosomal protein eL43 family.

The polypeptide is Putative ribosomal protein eL43-like (RPL37AP8) (Homo sapiens (Human)).